Reading from the N-terminus, the 394-residue chain is RNA binding protein fox-1 homolog 2 (394 aa).

Disordered stretches follow at residues 1-70 (MGRL…DYAG) and 83-135 (TQAH…HVSN). Polar residues-rich tracts occupy residues 24-36 (RDSQGNQEPTTTP) and 83-103 (TQAHGEQSSNSPSTQNGSLTT). Residues 105-125 (GGAQTDGQQSQTQSSENSESK) show a composition bias toward low complexity. The RRM domain maps to 129–205 (KRLHVSNIPF…RKIEVNNATA (77 aa)). The residue at position 285 (arginine 285) is an Omega-N-methylarginine. An asymmetric dimethylarginine mark is found at arginine 301 and arginine 333. Asymmetric dimethylarginine; alternate occurs at positions 385 and 390. Omega-N-methylarginine; alternate occurs at positions 385 and 390.

As to quaternary structure, interacts with ER-alpha N-terminal activation domain. Interacts with RBPMS; the interaction allows cooperative assembly of stable cell-specific alternative splicing regulatory complexes.

It localises to the nucleus. Its subcellular location is the cytoplasm. RNA-binding protein that regulates alternative splicing events by binding to 5'-UGCAUGU-3' elements. Prevents binding of U2AF2 to the 3'-splice site. Regulates alternative splicing of tissue-specific exons and of differentially spliced exons during erythropoiesis. Seems to act as a coregulatory factor of ER-alpha. Together with RNA binding proteins RBPMS and MBNL1/2, activates vascular smooth muscle cells alternative splicing events. This Bos taurus (Bovine) protein is RNA binding protein fox-1 homolog 2 (RBFOX2).